The sequence spans 199 residues: uncharacterized protein (199 aa).

4 consecutive transmembrane segments (helical) span residues 40–60, 86–106, 117–137, and 166–186; these read LLICVFKFCSLFMFSKFFCFL, VLTGASSSFTTTAVVAATFPF, TSWPLFIMLMSSSALPLLTSS, and FLLAMSMFVDFFSHPCFALIL.

The protein localises to the membrane. This is an uncharacterized protein from Saccharomyces cerevisiae (strain ATCC 204508 / S288c) (Baker's yeast).